Consider the following 214-residue polypeptide: Probable transaldolase (214 aa).

The active-site Schiff-base intermediate with substrate is Lys83.

Belongs to the transaldolase family. Type 3B subfamily.

The protein localises to the cytoplasm. The enzyme catalyses D-sedoheptulose 7-phosphate + D-glyceraldehyde 3-phosphate = D-erythrose 4-phosphate + beta-D-fructose 6-phosphate. Its pathway is carbohydrate degradation; pentose phosphate pathway; D-glyceraldehyde 3-phosphate and beta-D-fructose 6-phosphate from D-ribose 5-phosphate and D-xylulose 5-phosphate (non-oxidative stage): step 2/3. Its function is as follows. Transaldolase is important for the balance of metabolites in the pentose-phosphate pathway. This chain is Probable transaldolase, found in Geobacter sulfurreducens (strain ATCC 51573 / DSM 12127 / PCA).